The primary structure comprises 355 residues: MDYTLDLSVTTVTDYYYPDIFSSPCDAELIQTNGKLLLAVFYCLLFVFSLLGNSLVILVLVVCKKLRSITDVYLLNLALSDLLFVFSFPFQTYYLLDQWVFGTVMCKVVSGFYYIGFYSSMFFITLMSVDRYLAVVHAVYALKVRTIRMGTTLCLAVWLTAIMATIPLLVFYQVASEDGVLQCYSFYNQQTLKWKIFTNFKMNILGLLIPFTIFMFCYIKILHQLKRCQNHNKTKAIRLVLIVVIASLLFWVPFNVVLFLTSLHSMHILDGCSISQQLTYATHVTEIISFTHCCVNPVIYAFVGEKFKKHLSEIFQKSCSQIFNYLGRQMPRESCEKSSSCQQHSSRSSSVDYIL.

At 1 to 35 (MDYTLDLSVTTVTDYYYPDIFSSPCDAELIQTNGK) the chain is on the extracellular side. The chain crosses the membrane as a helical span at residues 36–63 (LLLAVFYCLLFVFSLLGNSLVILVLVVC). The Cytoplasmic portion of the chain corresponds to 64–73 (KKLRSITDVY). The chain crosses the membrane as a helical span at residues 74 to 93 (LLNLALSDLLFVFSFPFQTY). Residues 94-107 (YLLDQWVFGTVMCK) are Extracellular-facing. Cysteines 106 and 183 form a disulfide. A helical membrane pass occupies residues 108 to 129 (VVSGFYYIGFYSSMFFITLMSV). Residues 130–146 (DRYLAVVHAVYALKVRT) are Cytoplasmic-facing. A helical transmembrane segment spans residues 147–171 (IRMGTTLCLAVWLTAIMATIPLLVF). Residues 172–202 (YQVASEDGVLQCYSFYNQQTLKWKIFTNFKM) lie on the Extracellular side of the membrane. Residues 203–222 (NILGLLIPFTIFMFCYIKIL) traverse the membrane as a helical segment. Residues 223–238 (HQLKRCQNHNKTKAIR) are Cytoplasmic-facing. The helical transmembrane segment at 239–263 (LVLIVVIASLLFWVPFNVVLFLTSL) threads the bilayer. The Extracellular portion of the chain corresponds to 264-280 (HSMHILDGCSISQQLTY). A helical transmembrane segment spans residues 281–304 (ATHVTEIISFTHCCVNPVIYAFVG). The Cytoplasmic portion of the chain corresponds to 305–355 (EKFKKHLSEIFQKSCSQIFNYLGRQMPRESCEKSSSCQQHSSRSSSVDYIL).

This sequence belongs to the G-protein coupled receptor 1 family.

It localises to the cell membrane. Functionally, receptor for the chemokine CCL1/SCYA1/I-309. May regulate monocyte chemotaxis and thymic cell line apoptosis. Alternative coreceptor with CD4 for HIV-1 infection. In Homo sapiens (Human), this protein is C-C chemokine receptor type 8 (CCR8).